The sequence spans 201 residues: Holliday junction branch migration complex subunit RuvA (201 aa).

The tract at residues 1–63 (MYDYIKGTVT…EDNISLFGFQ (63 aa)) is domain I. Positions 64–142 (TTEERYLFKK…DVVASEIVYV (79 aa)) are domain II. The tract at residues 143–153 (APENDMVAGLS) is flexible linker. The segment at 153 to 201 (SPQLEEAVLALEALGYSTRELKKVIPKLAKEADLTSDAYIKLALQLMTK) is domain III.

The protein belongs to the RuvA family. As to quaternary structure, homotetramer. Forms an RuvA(8)-RuvB(12)-Holliday junction (HJ) complex. HJ DNA is sandwiched between 2 RuvA tetramers; dsDNA enters through RuvA and exits via RuvB. An RuvB hexamer assembles on each DNA strand where it exits the tetramer. Each RuvB hexamer is contacted by two RuvA subunits (via domain III) on 2 adjacent RuvB subunits; this complex drives branch migration. In the full resolvosome a probable DNA-RuvA(4)-RuvB(12)-RuvC(2) complex forms which resolves the HJ.

The protein resides in the cytoplasm. Functionally, the RuvA-RuvB-RuvC complex processes Holliday junction (HJ) DNA during genetic recombination and DNA repair, while the RuvA-RuvB complex plays an important role in the rescue of blocked DNA replication forks via replication fork reversal (RFR). RuvA specifically binds to HJ cruciform DNA, conferring on it an open structure. The RuvB hexamer acts as an ATP-dependent pump, pulling dsDNA into and through the RuvAB complex. HJ branch migration allows RuvC to scan DNA until it finds its consensus sequence, where it cleaves and resolves the cruciform DNA. The protein is Holliday junction branch migration complex subunit RuvA of Listeria monocytogenes serovar 1/2a (strain ATCC BAA-679 / EGD-e).